The chain runs to 181 residues: Interleukin-10 (181 aa).

An N-terminal signal peptide occupies residues 1-19 (MHGSALLCCCLVLLAGVGA). Disulfide bonds link Cys-31–Cys-129 and Cys-81–Cys-135. The N-linked (GlcNAc...) asparagine glycan is linked to Asn-137.

This sequence belongs to the IL-10 family. As to quaternary structure, homodimer. Interacts with IL10RA and IL10RB.

Its subcellular location is the secreted. Its function is as follows. Major immune regulatory cytokine that acts on many cells of the immune system where it has profound anti-inflammatory functions, limiting excessive tissue disruption caused by inflammation. Mechanistically, IL10 binds to its heterotetrameric receptor comprising IL10RA and IL10RB leading to JAK1 and STAT2-mediated phosphorylation of STAT3. In turn, STAT3 translocates to the nucleus where it drives expression of anti-inflammatory mediators. Targets antigen-presenting cells (APCs) such as macrophages and monocytes and inhibits their release of pro-inflammatory cytokines including granulocyte-macrophage colony-stimulating factor /GM-CSF, granulocyte colony-stimulating factor/G-CSF, IL-1 alpha, IL-1 beta, IL-6, IL-8 and TNF-alpha. Also interferes with antigen presentation by reducing the expression of MHC-class II and co-stimulatory molecules, thereby inhibiting their ability to induce T cell activation. In addition, controls the inflammatory response of macrophages by reprogramming essential metabolic pathways including mTOR signaling. In Canis lupus familiaris (Dog), this protein is Interleukin-10 (IL10).